Consider the following 85-residue polypeptide: Putative membrane protein insertion efficiency factor (85 aa).

This sequence belongs to the UPF0161 family.

The protein resides in the cell inner membrane. Functionally, could be involved in insertion of integral membrane proteins into the membrane. This Sodalis glossinidius (strain morsitans) protein is Putative membrane protein insertion efficiency factor.